We begin with the raw amino-acid sequence, 260 residues long: UPF0246 protein Tola_0968 (260 aa).

It belongs to the UPF0246 family.

This chain is UPF0246 protein Tola_0968, found in Tolumonas auensis (strain DSM 9187 / NBRC 110442 / TA 4).